The chain runs to 90 residues: Delta-aiptatoxin-Adi1a (90 aa).

An N-terminal signal peptide occupies residues 1–21; sequence MKTAMLIAVLGFCAALCFVES. Positions 22-44 are excised as a propeptide; the sequence is SHEEEREAAVYLTDLVSKAESAI. 3 cysteine pairs are disulfide-bonded: cysteine 50-cysteine 86, cysteine 52-cysteine 77, and cysteine 70-cysteine 87.

The protein belongs to the sea anemone sodium channel inhibitory toxin family.

It localises to the secreted. Its subcellular location is the nematocyst. Its function is as follows. Cardioactive peptide that acts on voltage-gated sodium channels (hNav1.5/SCN5A) and voltage-gated potassium channels (Kv). The activity on sodium channels consists of inhibition on sodium current inactivation with no significant effect on current activation. This effect may be caused by direct interaction of the toxin with sodium channel site-3. The activity on potassium channels consists of a significant increase of the amplitude of the transient component of the potassium current, shifting the current threshold to more negative membrane potentials. These effects are concentration-dependent and reversible and may be due to a direct interaction between the toxin and the voltage-sensing domain of the channel. Physiologically, this toxin increases the amplitude of cardiomyocyte contraction and slows the late phase of the twitch relaxation velocity with no induction of spontaneous twitching. It increases action potential duration of cardiomyocytes with no effect on its threshold and on the cell resting potential. On insects, it shows neurotoxic activity to the blowfly larvae S.falculaty, causing an immediate spasm that progressed to body contraction and paralysis. The polypeptide is Delta-aiptatoxin-Adi1a (Exaiptasia diaphana (Tropical sea anemone)).